The primary structure comprises 244 residues: Probable transcriptional regulatory protein DR_2548 (244 aa).

Residues 1–23 form a disordered region; that stretch reads MAGHSKWAQIKRKKGANDKKRSA.

The protein belongs to the TACO1 family.

It localises to the cytoplasm. The sequence is that of Probable transcriptional regulatory protein DR_2548 from Deinococcus radiodurans (strain ATCC 13939 / DSM 20539 / JCM 16871 / CCUG 27074 / LMG 4051 / NBRC 15346 / NCIMB 9279 / VKM B-1422 / R1).